The primary structure comprises 166 residues: Probable tyrosine-protein phosphatase DG1060 (166 aa).

Residues 9–162 (NFGMVADDLY…LVTYNNAPQW (154 aa)) form the Tyrosine-protein phosphatase domain. The Phosphocysteine intermediate role is filled by Cys101.

Belongs to the protein-tyrosine phosphatase family.

It localises to the cytoplasm. The enzyme catalyses O-phospho-L-tyrosyl-[protein] + H2O = L-tyrosyl-[protein] + phosphate. In Dictyostelium discoideum (Social amoeba), this protein is Probable tyrosine-protein phosphatase DG1060 (DG1060).